The sequence spans 406 residues: Cysteine desulfurase (406 aa).

N6-(pyridoxal phosphate)lysine is present on Lys226. The active-site Cysteine persulfide intermediate is the Cys364.

The protein belongs to the class-V pyridoxal-phosphate-dependent aminotransferase family. Csd subfamily. Homodimer. Interacts with SufE and the SufBCD complex composed of SufB, SufC and SufD. The interaction with SufE is required to mediate the direct transfer of the sulfur atom from the S-sulfanylcysteine. Pyridoxal 5'-phosphate is required as a cofactor.

Its subcellular location is the cytoplasm. It catalyses the reaction (sulfur carrier)-H + L-cysteine = (sulfur carrier)-SH + L-alanine. The enzyme catalyses L-selenocysteine + AH2 = hydrogenselenide + L-alanine + A + H(+). It functions in the pathway cofactor biosynthesis; iron-sulfur cluster biosynthesis. In terms of biological role, cysteine desulfurases mobilize the sulfur from L-cysteine to yield L-alanine, an essential step in sulfur metabolism for biosynthesis of a variety of sulfur-containing biomolecules. Component of the suf operon, which is activated and required under specific conditions such as oxidative stress and iron limitation. Acts as a potent selenocysteine lyase in vitro, that mobilizes selenium from L-selenocysteine. Selenocysteine lyase activity is however unsure in vivo. The chain is Cysteine desulfurase from Escherichia coli O7:K1 (strain IAI39 / ExPEC).